A 364-amino-acid chain; its full sequence is Fructose-bisphosphate aldolase C (364 aa).

Phosphotyrosine is present on Tyr5. A phosphoserine mark is found at Ser36, Ser39, and Ser45. Arg56 contributes to the substrate binding site. Lys111 carries the post-translational modification N6-acetyllysine. Ser132 carries the phosphoserine modification. Lys147 serves as a coordination point for substrate. The active-site Proton acceptor is Glu188. Lys230 acts as the Schiff-base intermediate with dihydroxyacetone-P in catalysis.

This sequence belongs to the class I fructose-bisphosphate aldolase family. Homotetramer. Interacts with ATP6V1E1.

It carries out the reaction beta-D-fructose 1,6-bisphosphate = D-glyceraldehyde 3-phosphate + dihydroxyacetone phosphate. It participates in carbohydrate degradation; glycolysis; D-glyceraldehyde 3-phosphate and glycerone phosphate from D-glucose: step 4/4. This is Fructose-bisphosphate aldolase C (ALDOC) from Macaca fascicularis (Crab-eating macaque).